The chain runs to 288 residues: Borealin (288 aa).

Residues 1–58 (MAPKKRSSRGTRTNTLRSRKLASFLKDFDREVQVRTKQIESDRQTLLKEVENLYNIEV) are required for interaction with INCENP. The interval 1 to 88 (MAPKKRSSRG…NRQALEEAAT (88 aa)) is required for centromere localization. The segment at 1–149 (MAPKKRSSRG…RKSHKNLRSA (149 aa)) is required for interaction with SENP3. A required to form a minimal CPC core complex that localizes to the central spindle and midbody and properly executes the role of the CPC during cytokinesis region spans residues 10-109 (GTRTNTLRSR…TAEAIQTPLK (100 aa)). Residues 20–78 (KLASFLKDFDREVQVRTKQIESDRQTLLKEVENLYNIEVLRLPKALQVMKWLDYFALGG) are required for interaction with INCENP and BIRC5. Thr88 carries the post-translational modification Phosphothreonine; by TTK. The residue at position 91 (Arg91) is a Citrulline. Thr94 is modified (phosphothreonine; by TTK). Thr106 is subject to Phosphothreonine. Phosphoserine is present on Ser110. The segment covering 124-134 (KEEEEDEEEEG) has biased composition (acidic residues). Residues 124–173 (KEEEEDEEEEGGGGGGRKSHKNLRSARVKRCPPSKKRTQSIQGRSRSKRL) form a disordered region. Residues 140–161 (RKSHKNLRSARVKRCPPSKKRT) are compositionally biased toward basic residues. A Glycyl lysine isopeptide (Lys-Gly) (interchain with G-Cter in SUMO2) cross-link involves residue Lys144. Ser174 carries the post-translational modification Phosphoserine; by AURKB. Phosphothreonine is present on residues Thr197 and Thr212. A phosphoserine mark is found at Ser227, Ser232, Ser246, and Ser252.

It belongs to the borealin family. In terms of assembly, may form homooligomers and homodimers. Component of the chromosomal passenger complex (CPC) composed of at least BIRC5/survivin, CDCA8/borealin, INCENP, AURKB or AURKC; in the complex forms a triple-helix bundle-based subcomplex with INCENP and BIRC5. Interacts with SENP3, UBE2I and RANBP2. Interacts (phosphorylated) with SGO1 and SGO2; the association is dependent on CDK1. Post-translationally, phosphorylated by TTK, essentially at Thr-88 and Thr-94. Phosphorylation (probably by CDK1) promotes targeting of the CPC to centromeric DNA. Sumoylated by UBE2I and RANBP2. Desumoylated by SENP3 through the removal of SUMO2 and SUMO3. In terms of processing, citrullinated by PADI4.

It is found in the nucleus. The protein resides in the nucleolus. Its subcellular location is the cytoplasm. It localises to the chromosome. The protein localises to the centromere. It is found in the cytoskeleton. The protein resides in the spindle. Functionally, component of the chromosomal passenger complex (CPC), a complex that acts as a key regulator of mitosis. The CPC complex has essential functions at the centromere in ensuring correct chromosome alignment and segregation and is required for chromatin-induced microtubule stabilization and spindle assembly. In the complex, it may be required to direct the CPC to centromeric DNA. This is Borealin (Cdca8) from Rattus norvegicus (Rat).